The sequence spans 166 residues: Endoribonuclease YbeY (166 aa).

Residues H129, H133, and H139 each coordinate Zn(2+).

Belongs to the endoribonuclease YbeY family. Zn(2+) is required as a cofactor.

It is found in the cytoplasm. Single strand-specific metallo-endoribonuclease involved in late-stage 70S ribosome quality control and in maturation of the 3' terminus of the 16S rRNA. The sequence is that of Endoribonuclease YbeY from Heliobacterium modesticaldum (strain ATCC 51547 / Ice1).